Reading from the N-terminus, the 412-residue chain is Alpha-1-antiproteinase (412 aa).

A signal peptide spans 1 to 24; that stretch reads MPSSISWGLLLLAGLCCLAPGSLA. Serine 33 carries the phosphoserine modification. Asparagine 65, asparagine 102, asparagine 165, and asparagine 266 each carry an N-linked (GlcNAc...) asparagine glycan. The segment at 368 to 387 is RCL; it reads GVTVLEAIPMSLPPDVRFDR. At serine 378 the chain carries Phosphoserine.

This sequence belongs to the serpin family. Interacts with CELA2A. Interacts with ERGIC3 and LMAN1/ERGIC53. Interacts with PRSS1/Trypsin. As to expression, plasma.

The protein resides in the secreted. In terms of biological role, inhibitor of serine proteases. The chain is Alpha-1-antiproteinase from Callosciurus caniceps (Gray-bellied squirrel).